The chain runs to 293 residues: tRNA pseudouridine synthase A (293 aa).

The active-site Nucleophile is D67. A substrate-binding site is contributed by Y125.

This sequence belongs to the tRNA pseudouridine synthase TruA family. As to quaternary structure, homodimer.

The enzyme catalyses uridine(38/39/40) in tRNA = pseudouridine(38/39/40) in tRNA. In terms of biological role, formation of pseudouridine at positions 38, 39 and 40 in the anticodon stem and loop of transfer RNAs. In Synechococcus sp. (strain CC9605), this protein is tRNA pseudouridine synthase A.